The chain runs to 71 residues: Small ribosomal subunit protein eS17 (71 aa).

Belongs to the eukaryotic ribosomal protein eS17 family.

The chain is Small ribosomal subunit protein eS17 from Pyrobaculum arsenaticum (strain DSM 13514 / JCM 11321 / PZ6).